The chain runs to 142 residues: Large ribosomal subunit protein uL11 (142 aa).

It belongs to the universal ribosomal protein uL11 family. Part of the ribosomal stalk of the 50S ribosomal subunit. Interacts with L10 and the large rRNA to form the base of the stalk. L10 forms an elongated spine to which L12 dimers bind in a sequential fashion forming a multimeric L10(L12)X complex. In terms of processing, one or more lysine residues are methylated.

Its function is as follows. Forms part of the ribosomal stalk which helps the ribosome interact with GTP-bound translation factors. This is Large ribosomal subunit protein uL11 from Sinorhizobium medicae (strain WSM419) (Ensifer medicae).